The sequence spans 560 residues: MKESYDYIIIGGGSAGSVLGGRLSEDVSNNVLVLEAGRSDYPWDLLIQMPAALMYPAGNKLYDWIYETTPEPHMDGRKVGHARGKVLGGSSSINGMIYQRGNPMDYEKWAKPEGMESWDYAHCLPYFKRLETTFGSKKGDPYRGHHGPIKLRRGPADNPLFQAFFDAGVEAGYNKTPDVNGFRQEGFGPFDSQVHNGRRVSASRAYLHPAMKRKNLEVQTRAFVTKLNFEGNKVTGVTFKKNGKEHTESAKEVILSGGAINSPQLLQLSGIGDSEHLRSLGIEPRIHLPGVGENFEDHLEVYVQHACKQPVSMQPSLNKLKMPFIGLQWILGRKGAAASNHFEGGGFVRSNDDVDYPNLMFHFLPIAVRYDGTKAPAAHGYQVHVGPMYSNSRGHLKIKSKDPFEKPEFVFNYLSTEEDKREWVEAIKVARNILKQKALDPFNGGEISPGPEVQTDEEIIEWVKRDGETALHPSCSCRMGPASDEMSVVDPETFKVHGMENLRVVDASVMPRTTNGNIHSPVLMMAERASDIIRGKKPLDPQYIDFYRHGVHDKDAGTVK.

6-35 provides a ligand contact to FAD; the sequence is DYIIIGGGSAGSVLGGRLSEDVSNNVLVLE. His472 serves as the catalytic Proton acceptor.

Belongs to the GMC oxidoreductase family. Requires FAD as cofactor.

The enzyme catalyses choline + A = betaine aldehyde + AH2. The catalysed reaction is betaine aldehyde + NAD(+) + H2O = glycine betaine + NADH + 2 H(+). It functions in the pathway amine and polyamine biosynthesis; betaine biosynthesis via choline pathway; betaine aldehyde from choline (cytochrome c reductase route): step 1/1. Involved in the biosynthesis of the osmoprotectant glycine betaine. Catalyzes the oxidation of choline to betaine aldehyde and betaine aldehyde to glycine betaine at the same rate. This chain is Oxygen-dependent choline dehydrogenase, found in Staphylococcus xylosus.